A 57-amino-acid polypeptide reads, in one-letter code: MAPLLKLNILLLIVLICFTFHANATHRCVRHGEYCNERIRLDCCFGDCVKNKCSDDF.

The N-terminal stretch at Met1–Ala24 is a signal peptide. Intrachain disulfides connect Cys28-Cys44, Cys35-Cys48, and Cys43-Cys53.

This sequence belongs to the asilidin-1 family. In terms of tissue distribution, expressed by the venom gland. Exclusively expressed in the venom thoracic glands (and not in body tissues).

Its subcellular location is the secreted. Its function is as follows. May act as a neurotoxin. This chain is U-Asilidin(1)-Mar2a, found in Machimus arthriticus (Breck robberfly).